We begin with the raw amino-acid sequence, 61 residues long: Metallothionein-1 (61 aa).

At M1 the chain carries N-acetylmethionine. A beta region spans residues 1–29 (MDPNCSCSTGGSCTCTSSCACKNCKCTSC). C5, C7, C13, C15, C19, C21, C24, C26, C29, C33, C34, C36, C37, C41, C44, C48, C50, C57, C59, and C60 together coordinate a divalent metal cation. The interval 30 to 61 (KKSCCSCCPVGCSKCAQGCVCKGAADKCTCCA) is alpha.

The protein belongs to the metallothionein superfamily. Type 1 family.

In terms of biological role, metallothioneins have a high content of cysteine residues that bind various heavy metals; these proteins are transcriptionally regulated by both heavy metals and glucocorticoids. The polypeptide is Metallothionein-1 (Mt1) (Mus musculus (Mouse)).